Here is a 310-residue protein sequence, read N- to C-terminus: UDP-N-acetylenolpyruvoylglucosamine reductase (310 aa).

An FAD-binding PCMH-type domain is found at 30-200 (RVGGPAQWLA…VAAEFQLEPG (171 aa)). Arg179 is an active-site residue. The active-site Proton donor is the Ser230. Residue Glu300 is part of the active site.

Belongs to the MurB family. It depends on FAD as a cofactor.

It localises to the cytoplasm. It carries out the reaction UDP-N-acetyl-alpha-D-muramate + NADP(+) = UDP-N-acetyl-3-O-(1-carboxyvinyl)-alpha-D-glucosamine + NADPH + H(+). The protein operates within cell wall biogenesis; peptidoglycan biosynthesis. Functionally, cell wall formation. The sequence is that of UDP-N-acetylenolpyruvoylglucosamine reductase from Synechococcus sp. (strain WH7803).